The chain runs to 458 residues: Phosphoglucosamine mutase (458 aa).

The Phosphoserine intermediate role is filled by S100. Mg(2+) is bound by residues S100, D254, D256, and D258. Position 100 is a phosphoserine (S100).

Belongs to the phosphohexose mutase family. Requires Mg(2+) as cofactor. Activated by phosphorylation.

It carries out the reaction alpha-D-glucosamine 1-phosphate = D-glucosamine 6-phosphate. In terms of biological role, catalyzes the conversion of glucosamine-6-phosphate to glucosamine-1-phosphate. This is Phosphoglucosamine mutase from Nocardia farcinica (strain IFM 10152).